The following is a 1076-amino-acid chain: Carbamoyl phosphate synthase large chain (1076 aa).

The carboxyphosphate synthetic domain stretch occupies residues M1–E403. Residues R129, R169, G175, G176, E208, L210, E215, G241, V242, H243, Q285, and E299 each contribute to the ATP site. Residues D133–V328 enclose the ATP-grasp 1 domain. Q285, E299, and N301 together coordinate Mg(2+). Q285, E299, and N301 together coordinate Mn(2+). Positions T404–A553 are oligomerization domain. The carbamoyl phosphate synthetic domain stretch occupies residues E554–G935. The region spanning Q678 to A869 is the ATP-grasp 2 domain. ATP-binding residues include R714, H753, L755, E760, G785, V786, H787, S788, Q828, and E840. Q828, E840, and N842 together coordinate Mg(2+). Mn(2+) is bound by residues Q828, E840, and N842. An MGS-like domain is found at E936–Q1076. The allosteric domain stretch occupies residues E936–Q1076.

This sequence belongs to the CarB family. In terms of assembly, composed of two chains; the small (or glutamine) chain promotes the hydrolysis of glutamine to ammonia, which is used by the large (or ammonia) chain to synthesize carbamoyl phosphate. Tetramer of heterodimers (alpha,beta)4. Mg(2+) serves as cofactor. It depends on Mn(2+) as a cofactor.

It carries out the reaction hydrogencarbonate + L-glutamine + 2 ATP + H2O = carbamoyl phosphate + L-glutamate + 2 ADP + phosphate + 2 H(+). The enzyme catalyses hydrogencarbonate + NH4(+) + 2 ATP = carbamoyl phosphate + 2 ADP + phosphate + 2 H(+). The protein operates within amino-acid biosynthesis; L-arginine biosynthesis; carbamoyl phosphate from bicarbonate: step 1/1. It functions in the pathway pyrimidine metabolism; UMP biosynthesis via de novo pathway; (S)-dihydroorotate from bicarbonate: step 1/3. Its function is as follows. Large subunit of the glutamine-dependent carbamoyl phosphate synthetase (CPSase). CPSase catalyzes the formation of carbamoyl phosphate from the ammonia moiety of glutamine, carbonate, and phosphate donated by ATP, constituting the first step of 2 biosynthetic pathways, one leading to arginine and/or urea and the other to pyrimidine nucleotides. The large subunit (synthetase) binds the substrates ammonia (free or transferred from glutamine from the small subunit), hydrogencarbonate and ATP and carries out an ATP-coupled ligase reaction, activating hydrogencarbonate by forming carboxy phosphate which reacts with ammonia to form carbamoyl phosphate. In Halomonas eurihalina, this protein is Carbamoyl phosphate synthase large chain.